Consider the following 154-residue polypeptide: Methylglyoxal synthase (154 aa).

The region spanning 6–154 is the MGS-like domain; it reads GALPSRKQIA…AYIAERTKKL (149 aa). Substrate-binding positions include His19, Lys23, 45–48, and 65–66; these read TGTT and SG. Catalysis depends on Asp71, which acts as the Proton donor/acceptor. Position 98 (His98) interacts with substrate.

This sequence belongs to the methylglyoxal synthase family.

The enzyme catalyses dihydroxyacetone phosphate = methylglyoxal + phosphate. Catalyzes the formation of methylglyoxal from dihydroxyacetone phosphate. This Saccharophagus degradans (strain 2-40 / ATCC 43961 / DSM 17024) protein is Methylglyoxal synthase.